Here is a 281-residue protein sequence, read N- to C-terminus: NADPH-dependent 7-cyano-7-deazaguanine reductase (281 aa).

88–90 (IES) serves as a coordination point for substrate. 90-91 (SK) serves as a coordination point for NADPH. The active-site Thioimide intermediate is Cys-189. Asp-196 serves as the catalytic Proton donor. 228–229 (HE) serves as a coordination point for substrate. An NADPH-binding site is contributed by 257 to 258 (RG).

The protein belongs to the GTP cyclohydrolase I family. QueF type 2 subfamily. As to quaternary structure, homodimer.

It localises to the cytoplasm. The catalysed reaction is 7-aminomethyl-7-carbaguanine + 2 NADP(+) = 7-cyano-7-deazaguanine + 2 NADPH + 3 H(+). It functions in the pathway tRNA modification; tRNA-queuosine biosynthesis. Functionally, catalyzes the NADPH-dependent reduction of 7-cyano-7-deazaguanine (preQ0) to 7-aminomethyl-7-deazaguanine (preQ1). This chain is NADPH-dependent 7-cyano-7-deazaguanine reductase, found in Erwinia tasmaniensis (strain DSM 17950 / CFBP 7177 / CIP 109463 / NCPPB 4357 / Et1/99).